The chain runs to 138 residues: Large ribosomal subunit protein uL16c (138 aa).

It belongs to the universal ribosomal protein uL16 family. As to quaternary structure, part of the 50S ribosomal subunit.

Its subcellular location is the plastid. The protein localises to the chloroplast. This is Large ribosomal subunit protein uL16c from Chaetosphaeridium globosum (Charophycean green alga).